A 1186-amino-acid chain; its full sequence is Pumilio homolog 1 (1186 aa).

The residue at position 2 (Ser2) is an N-acetylserine. The residue at position 19 (Ser19) is a Phosphoserine. The segment at 22 to 73 is disordered; the sequence is LKHHPQEPANPNMPVVLTSGTGSQAQPQPAANQALAAGTHSSPVPGSIGVAG. The span at 45-58 shows a compositional bias: low complexity; that stretch reads QAQPQPAANQALAA. Ser75, Ser98, and Ser106 each carry phosphoserine. The residue at position 112 (Thr112) is a Phosphothreonine. Ser124, Ser159, Ser197, Ser209, and Ser229 each carry phosphoserine. The interval 233 to 272 is disordered; the sequence is SCLRKGGFGPRDADSDENDKGEKKNKGTFDGDKLGDLKEE. A compositionally biased stretch (basic and acidic residues) spans 250-272; it reads NDKGEKKNKGTFDGDKLGDLKEE. At Ser305 the chain carries Phosphoserine. Residues 485–502 show a composition bias toward low complexity; that stretch reads TNSANQQTTPQAQQGQQQ. Disordered regions lie at residues 485–524 and 613–648; these read TNSANQQTTPQAQQGQQQVLRGGASQRPLTPNQNQQGQQT and AGTTNGPFRPLGTQQPQPQPQQQPNNNLASSSFYGN. A compositionally biased stretch (polar residues) spans 511–524; the sequence is RPLTPNQNQQGQQT. Residue Thr514 is modified to Phosphothreonine. The span at 626–639 shows a compositional bias: low complexity; it reads QQPQPQPQQQPNNN. Residues Ser709 and Ser714 each carry the phosphoserine modification. The disordered stretch occupies residues 742–775; sequence GPVGMPLPSQGPGHSQTPPPSLSSHGSSSSLNLG. The segment covering 763 to 775 has biased composition (low complexity); sequence LSSHGSSSSLNLG. The residue at position 796 (Arg796) is an Omega-N-methylarginine. Residues Ser806 and Ser822 each carry the phosphoserine modification. The PUM-HD domain maps to 828–1168; the sequence is GRSRLLEDFR…HILAKLEKYY (341 aa). Pumilio repeat units lie at residues 848 to 883, 884 to 919, 920 to 955, 956 to 991, 992 to 1027, 1028 to 1063, 1064 to 1099, and 1103 to 1142; these read EIAGHIMEFSQDQHGSRFIQLKLERATPAERQLVFN, EILQAAYQLMVDVFGNYVIQKFFEFGSLEQKLALAE, RIRGHVLSLALQMYGCRVIQKALEFIPSDQQNEMVR, ELDGHVLKCVKDQNGNHVVQKCIECVQPQSLQFIID, AFKGQVFALSTHPYGCRVIQRILEHCLPDQTLPILE, ELHQHTEQLVQDQYGNYVIQHVLEHGRPEDKSKIVA, EIRGNVLVLSQHKFASNVVEKCVTHASRTERAVLID, and TMNDGPHSALYTMMKDQYANYVVQKMIDVAEPGQRKIVMH. Positions 863 to 867 are adenine-nucleotide binding in RNA target; it reads SRFIQ. The segment at 899–903 is uracil-nucleotide binding in RNA target; the sequence is NYVIQ. Positions 935–939 are adenine-nucleotide binding in RNA target; the sequence is CRVIQ. Positions 971-975 are non-specific-nucleotide binding in RNA target; it reads NHVVQ. Positions 1007-1011 are adenine-nucleotide binding in RNA target; it reads CRVIQ. The segment at 1043–1047 is uracil-nucleotide binding in RNA target; the sequence is NYVIQ. Guanine-nucleotide binding in RNA target stretches follow at residues 1079-1083 and 1080-1083; these read SNVVE and NVVE. A uracil-nucleotide binding in RNA target region spans residues 1122–1126; sequence NYVVQ.

In terms of assembly, recruits the CCR4-POP2-NOT deadenylase leading to translational inhibition and mRNA degradation. Interacts with TRIM71 (via NHL repeats) in an RNA-dependent manner. Post-translationally, phosphorylation at Ser-714 promotes RNA-binding activity. Following growth factor stimulation phosphorylated at Ser-714, promoting binding to the 3'-UTR of CDKN1B/p27 mRNA.

It is found in the cytoplasm. The protein resides in the P-body. The protein localises to the cytoplasmic granule. Its function is as follows. Sequence-specific RNA-binding protein that acts as a post-transcriptional repressor by binding the 3'-UTR of mRNA targets. Binds to an RNA consensus sequence, the Pumilio Response Element (PRE), 5'-UGUANAUA-3', that is related to the Nanos Response Element (NRE). Mediates post-transcriptional repression of transcripts via different mechanisms: acts via direct recruitment of the CCR4-POP2-NOT deadenylase leading to translational inhibition and mRNA degradation. Also mediates deadenylation-independent repression by promoting accessibility of miRNAs. Following growth factor stimulation, phosphorylated and binds to the 3'-UTR of CDKN1B/p27 mRNA, inducing a local conformational change that exposes miRNA-binding sites, promoting association of miR-221 and miR-222, efficient suppression of CDKN1B/p27 expression, and rapid entry to the cell cycle. Acts as a post-transcriptional repressor of E2F3 mRNAs by binding to its 3'-UTR and facilitating miRNA regulation. Represses a program of genes necessary to maintain genomic stability such as key mitotic, DNA repair and DNA replication factors. Its ability to repress those target mRNAs is regulated by the lncRNA NORAD (non-coding RNA activated by DNA damage) which, due to its high abundance and multitude of PUMILIO binding sites, is able to sequester a significant fraction of PUM1 and PUM2 in the cytoplasm. Involved in neuronal functions by regulating ATXN1 mRNA levels: acts by binding to the 3'-UTR of ATXN1 transcripts, leading to their down-regulation independently of the miRNA machinery. Plays a role in cytoplasmic sensing of viral infection. In testis, acts as a post-transcriptional regulator of spermatogenesis by binding to the 3'-UTR of mRNAs coding for regulators of p53/TP53. Involved in embryonic stem cell renewal by facilitating the exit from the ground state: acts by targeting mRNAs coding for naive pluripotency transcription factors and accelerates their down-regulation at the onset of differentiation. Binds specifically to miRNA MIR199A precursor, with PUM2, regulates miRNA MIR199A expression at a postranscriptional level. The polypeptide is Pumilio homolog 1 (PUM1) (Pongo abelii (Sumatran orangutan)).